The chain runs to 235 residues: 2-C-methyl-D-erythritol 4-phosphate cytidylyltransferase (235 aa).

The protein belongs to the IspD/TarI cytidylyltransferase family. IspD subfamily.

The enzyme catalyses 2-C-methyl-D-erythritol 4-phosphate + CTP + H(+) = 4-CDP-2-C-methyl-D-erythritol + diphosphate. Its pathway is isoprenoid biosynthesis; isopentenyl diphosphate biosynthesis via DXP pathway; isopentenyl diphosphate from 1-deoxy-D-xylulose 5-phosphate: step 2/6. Catalyzes the formation of 4-diphosphocytidyl-2-C-methyl-D-erythritol from CTP and 2-C-methyl-D-erythritol 4-phosphate (MEP). In Pseudomonas putida (strain GB-1), this protein is 2-C-methyl-D-erythritol 4-phosphate cytidylyltransferase.